The primary structure comprises 670 residues: WD repeat-containing protein 48 homolog (670 aa).

7 WD repeats span residues Arg-13–Pro-52, His-59–Thr-98, Thr-101–Ala-140, Gly-152–Lys-191, Gly-194–Thr-233, Val-236–Leu-275, and Glu-278–Asn-317. The interval Ser-321 to Ser-348 is disordered. Over residues Thr-338–Ser-348 the composition is skewed to low complexity. The stretch at Lys-359–Asp-398 is one WD 8 repeat. Residues Gly-613–Asn-625 are compositionally biased toward gly residues. The segment at Gly-613 to Pro-645 is disordered. A compositionally biased stretch (low complexity) spans Ser-626 to Ser-635.

It belongs to the WD repeat WDR48 family. In terms of assembly, catalytic component of the Usp12-46 deubiquitylase complex consisting of Usp12-46, Wdr20 and Uaf1; regulatory subunit that, together wtih Wdr20, stabilizes Usp12-46. The Usp12-46 deubiquitylase complex associates with arr/arrow; the interaction leads to deubiquitination and stabilization of arr/arrow.

Regulatory component of the Usp12-46 deubiquitylase complex. activates deubiquitination by increasing the catalytic turnover without increasing the affinity of deubiquitinating enzymes for the substrate. The complex deubiquitylates the wg/wingless-signaling receptor arr/arrow, which stabilizes the receptor and increases its concentration at the cell surface; this enhances the sensitivity of cells to wg/wingless-signal stimulation. This increases the amplitude and spatial range of the signaling response to the wg/wingless morphogen gradient, facilitating the precise concentration-dependent regulation of its target genes. Together with Wdr20 and Usp12-46 required for wg/wingless-mediated signaling in the wing imaginal disc and for wg/wingless-dependent regulation of intestinal stem cell proliferation. In Culex quinquefasciatus (Southern house mosquito), this protein is WD repeat-containing protein 48 homolog.